Reading from the N-terminus, the 228-residue chain is UPF0173 metal-dependent hydrolase Dred_1740 (228 aa).

Belongs to the UPF0173 family.

This chain is UPF0173 metal-dependent hydrolase Dred_1740, found in Desulforamulus reducens (strain ATCC BAA-1160 / DSM 100696 / MI-1) (Desulfotomaculum reducens).